Reading from the N-terminus, the 732-residue chain is DNA-directed RNA polymerase subunit beta' (732 aa).

Residues C70, C72, C85, and C88 each coordinate Zn(2+). Mg(2+) is bound by residues D575, D577, and D579.

Belongs to the RNA polymerase beta' chain family. RpoC1 subfamily. In terms of assembly, in plastids the minimal PEP RNA polymerase catalytic core is composed of four subunits: alpha, beta, beta', and beta''. When a (nuclear-encoded) sigma factor is associated with the core the holoenzyme is formed, which can initiate transcription. The cofactor is Mg(2+). Zn(2+) is required as a cofactor.

Its subcellular location is the plastid. The protein resides in the chloroplast. It carries out the reaction RNA(n) + a ribonucleoside 5'-triphosphate = RNA(n+1) + diphosphate. In terms of biological role, DNA-dependent RNA polymerase catalyzes the transcription of DNA into RNA using the four ribonucleoside triphosphates as substrates. This chain is DNA-directed RNA polymerase subunit beta', found in Thalassiosira pseudonana (Marine diatom).